The following is a 104-amino-acid chain: UPF0145 protein cbdbA1711 (104 aa).

Belongs to the UPF0145 family.

The protein is UPF0145 protein cbdbA1711 of Dehalococcoides mccartyi (strain CBDB1).